We begin with the raw amino-acid sequence, 1423 residues long: Protein Shroom2 (1423 aa).

Residues 1-101 form a disordered region; sequence MRPSTVTSRI…PDHTLPKADA (101 aa). A compositionally biased stretch (low complexity) spans 8–27; sequence SRIWWSESSSSSSHDLSGSW. Composition is skewed to polar residues over residues 28-69 and 83-93; these read EHTS…NSSI and GSFSTCSSTPD. Residue serine 103 is modified to Phosphoserine. The segment at 116–171 is disordered; that stretch reads ASRPGSSRQSQSTGDPQGLQDRPSSFLPRVPGNSSKSPRPEDNIEPKIATSGRSNF. Residues 119–130 show a composition bias toward polar residues; that stretch reads PGSSRQSQSTGD. Phosphoserine occurs at positions 185, 197, and 291. Disordered stretches follow at residues 300 to 357, 586 to 630, 758 to 855, 872 to 930, and 1045 to 1085; these read SYHG…VNQK, TSFQ…SAPR, EILS…SGGQ, PSSS…KLTD, and VETP…KEKT. The 103-residue stretch at 575 to 677 folds into the ASD1 domain; it reads LKEAQTRVLK…SEPEKINEVG (103 aa). Residues 761-771 show a composition bias toward basic and acidic residues; that stretch reads SEDRKVEKASE. 4 positions are modified to phosphoserine: serine 806, serine 830, serine 831, and serine 833. Residue threonine 834 is modified to Phosphothreonine. Positions 872–885 are enriched in low complexity; it reads PSSSVLSSAQPQDS. The segment covering 891-923 has biased composition (polar residues); that stretch reads DPTSPQPEAQLSSKCQHLQTSTMETSRSPSPQF. Phosphoserine is present on residues serine 918 and serine 920. Positions 1054 to 1065 are enriched in pro residues; that stretch reads PEPQPPSTPAPP. Serine 1072 and serine 1329 each carry phosphoserine. Residues 1092–1418 enclose the ASD2 domain; sequence EELAREIVGK…QLKCLFDSLQ (327 aa).

The protein belongs to the shroom family. In terms of assembly, interacts with F-actin.

It is found in the apical cell membrane. Its subcellular location is the cell junction. The protein resides in the tight junction. The protein localises to the cytoplasm. It localises to the cytoskeleton. May be involved in endothelial cell morphology changes during cell spreading. In the retinal pigment epithelium, may regulate the biogenesis of melanosomes and promote their association with the apical cell surface by inducing gamma-tubulin redistribution. This Rattus norvegicus (Rat) protein is Protein Shroom2 (Shroom2).